A 506-amino-acid chain; its full sequence is Anaerobic nitric oxide reductase transcription regulator NorR (506 aa).

4-aspartylphosphate is present on Asp-57. One can recognise a Sigma-54 factor interaction domain in the interval 187 to 416; that stretch reads MIGLSPAMTQ…LEHAIHRAVV (230 aa). ATP-binding positions include 215–222 and 278–287; these read GETGTGKE and ADNGTLFLDE. Residues 481–500 constitute a DNA-binding region (H-T-H motif); that stretch reads WAASARALETDVANLHRLAK.

The protein operates within nitrogen metabolism; nitric oxide reduction. In terms of biological role, required for the expression of anaerobic nitric oxide (NO) reductase, acts as a transcriptional activator for at least the norVW operon. Activation also requires sigma-54. This chain is Anaerobic nitric oxide reductase transcription regulator NorR, found in Salmonella paratyphi A (strain ATCC 9150 / SARB42).